A 174-amino-acid polypeptide reads, in one-letter code: Trypsin inhibitor BvTI (174 aa).

2 disulfide bridges follow: Cys41-Cys84 and Cys131-Cys138.

It belongs to the protease inhibitor I3 (leguminous Kunitz-type inhibitor) family.

The protein resides in the secreted. In terms of biological role, inhibits bovine trypsin and chymotrypsin, and human plasmin, plasma kallikrein and factor XIIa. The chain is Trypsin inhibitor BvTI from Bauhinia variegata (Purple orchid tree).